Consider the following 358-residue polypeptide: Putative zinc metalloprotease RC0203 (358 aa).

Zn(2+) is bound at residue histidine 18. Glutamate 19 is an active-site residue. Histidine 22 serves as a coordination point for Zn(2+). A run of 4 helical transmembrane segments spans residues 52–71, 97–119, 285–307, and 332–351; these read GVRW…IYGY, FLIV…AGFY, YLLF…IPVL, and ILLQ…AVSN. Residues 102–186 form the PDZ domain; it reads AGPLINYLLA…STLTIERKSE (85 aa).

Belongs to the peptidase M50B family. It depends on Zn(2+) as a cofactor.

The protein resides in the cell inner membrane. This is Putative zinc metalloprotease RC0203 from Rickettsia conorii (strain ATCC VR-613 / Malish 7).